The primary structure comprises 406 residues: Acetamidase (406 aa).

A compositionally biased stretch (low complexity) spans 387-399 (CRPRSSTSTSPRR). The segment at 387–406 (CRPRSSTSTSPRRQGPAEGR) is disordered.

It belongs to the acetamidase/formamidase family.

The enzyme catalyses a monocarboxylic acid amide + H2O = a monocarboxylate + NH4(+). It carries out the reaction acetamide + H2O = acetate + NH4(+). In terms of biological role, allows acetamide to be used as a sole carbon or nitrogen source. This is Acetamidase (amdA) from Mycolicibacterium smegmatis (Mycobacterium smegmatis).